A 378-amino-acid polypeptide reads, in one-letter code: Putative zinc finger protein C09F5.3 (378 aa).

Over residues 1–14 the composition is skewed to basic residues; it reads MRKTEKMKRPHNSS. Disordered stretches follow at residues 1–36 and 61–80; these read MRKT…SKSI and TLSE…NSAP. 2 stretches are compositionally biased toward basic and acidic residues: residues 16-26 and 62-71; these read VKQEERADDSH and LSEHVPEKKP. The segment at 42–65 adopts a C2H2-type 1 zinc-finger fold; the sequence is LKCELCSTVCSSISQLQSHTLSEH. The C2H2-type 2; degenerate zinc-finger motif lies at 85–107; it reads VACQQCEDTFEDFAQFAIHMKSH. A C2H2-type 3; degenerate zinc finger spans residues 204 to 226; sequence YGCALCATSYPSQLHLITHVQMS. The tract at residues 231-250 is disordered; that stretch reads TFYPPSLPIPTPPSPKSTPK. The segment covering 235 to 246 has biased composition (pro residues); it reads PSLPIPTPPSPK. 4 C2H2-type zinc fingers span residues 254–277, 284–306, 312–334, and 355–377; these read LQCS…LRKH, DKCA…CLRH, HHCP…CAYH, and FVCP…TKIH.

It is found in the nucleus. This is Putative zinc finger protein C09F5.3 from Caenorhabditis elegans.